The chain runs to 97 residues: Co-chaperonin GroES (97 aa).

Belongs to the GroES chaperonin family. As to quaternary structure, heptamer of 7 subunits arranged in a ring. Interacts with the chaperonin GroEL.

The protein localises to the cytoplasm. Functionally, together with the chaperonin GroEL, plays an essential role in assisting protein folding. The GroEL-GroES system forms a nano-cage that allows encapsulation of the non-native substrate proteins and provides a physical environment optimized to promote and accelerate protein folding. GroES binds to the apical surface of the GroEL ring, thereby capping the opening of the GroEL channel. This Buchnera aphidicola subsp. Baizongia pistaciae (strain Bp) protein is Co-chaperonin GroES.